Consider the following 86-residue polypeptide: Small ribosomal subunit protein bS20 (86 aa).

Belongs to the bacterial ribosomal protein bS20 family.

In terms of biological role, binds directly to 16S ribosomal RNA. In Arthrobacter sp. (strain FB24), this protein is Small ribosomal subunit protein bS20.